A 901-amino-acid chain; its full sequence is Protein translocase subunit SecA (901 aa).

Residues glutamine 87, 105 to 109, and aspartate 512 each bind ATP; that span reads GEGKT. The Zn(2+) site is built by cysteine 885, cysteine 887, cysteine 896, and histidine 897.

The protein belongs to the SecA family. Monomer and homodimer. Part of the essential Sec protein translocation apparatus which comprises SecA, SecYEG and auxiliary proteins SecDF-YajC and YidC. Zn(2+) is required as a cofactor.

It is found in the cell inner membrane. It localises to the cytoplasm. It catalyses the reaction ATP + H2O + cellular proteinSide 1 = ADP + phosphate + cellular proteinSide 2.. Functionally, part of the Sec protein translocase complex. Interacts with the SecYEG preprotein conducting channel. Has a central role in coupling the hydrolysis of ATP to the transfer of proteins into and across the cell membrane, serving both as a receptor for the preprotein-SecB complex and as an ATP-driven molecular motor driving the stepwise translocation of polypeptide chains across the membrane. The protein is Protein translocase subunit SecA of Salmonella typhi.